Here is a 444-residue protein sequence, read N- to C-terminus: Jacalin-related lectin 42 (444 aa).

Ala2 carries the post-translational modification N-acetylalanine. Jacalin-type lectin domains follow at residues 2–143 (ALMV…YYIR), 146–289 (ATKS…YYAP), and 297–441 (TEKL…HVIP).

The protein belongs to the jacalin lectin family.

The protein is Jacalin-related lectin 42 (JAL42) of Arabidopsis thaliana (Mouse-ear cress).